We begin with the raw amino-acid sequence, 259 residues long: MNILLAFKAEPDAGMLAEKEWQAAAQGKSGPDISLLRSLLGADEQAAAALLLAQRKNGTPMSLTALSMGDERALHWLRYLMALGFEEAVLLETAADLRFAPEFVARHIAEWQHQNPLDLIITGCQSSEGQNGQTPFLLAEMLGWPCFTQVERFTLDALFITLEQRTEHGLRCCRVRLPAVIAVRQCGEVALPVPGMRQRMAAGKAEIIRKTVAAEMPAMQCLQLARAEQRRGATLIDGQTVAEKAQKLWQDYLRQRMQP.

This sequence belongs to the ETF beta-subunit/FixA family. In terms of assembly, ygcQ and YgcR form a heterodimer.

In terms of biological role, may play a role in a redox process. This Escherichia coli (strain K12) protein is Putative electron transfer flavoprotein subunit YgcR (ygcR).